The following is a 748-amino-acid chain: Cysteine--tRNA ligase, cytoplasmic (748 aa).

Positions 1–25 (MADSSGQQGKGRRVQPQWSPPAGTQ) are disordered. Alanine 2 is modified (N-acetylalanine). The residue at position 19 (serine 19) is a Phosphoserine. Residue cysteine 55 coordinates Zn(2+). Residue glycine 56 coordinates L-cysteine. The 'HIGH' region motif lies at 57–67 (PTVYDASHMGH). Residue arginine 79 is modified to Phosphoserine. Threonine 96 lines the L-cysteine pocket. A 'KIIK' region motif is present at residues 101–104 (KIIK). Serine 305 and serine 307 each carry phosphoserine. Zn(2+) is bound by residues cysteine 348, histidine 373, and glutamate 377. Residue histidine 373 participates in L-cysteine binding. The short motif at 406–410 (KMSKS) is the 'KMSKS' region element. An ATP-binding site is contributed by lysine 409. Lysine 503 bears the N6-acetyllysine mark. Positions 653–679 (EKRRVEEEKRKKKEEAARRKQEQEAAK) are enriched in basic and acidic residues. The interval 653–686 (EKRRVEEEKRKKKEEAARRKQEQEAAKLAKMKIP) is disordered. Serine 746 carries the post-translational modification Phosphoserine.

Belongs to the class-I aminoacyl-tRNA synthetase family. In terms of assembly, homodimer. Zn(2+) is required as a cofactor.

Its subcellular location is the cytoplasm. The enzyme catalyses tRNA(Cys) + L-cysteine + ATP = L-cysteinyl-tRNA(Cys) + AMP + diphosphate. In terms of biological role, catalyzes the ATP-dependent ligation of cysteine to tRNA(Cys). The polypeptide is Cysteine--tRNA ligase, cytoplasmic (Homo sapiens (Human)).